Here is a 286-residue protein sequence, read N- to C-terminus: Nucleotide-binding protein HS_1178 (286 aa).

An ATP-binding site is contributed by 8-15; that stretch reads GRSGAGKS. 56-59 serves as a coordination point for GTP; the sequence is DIRN.

The protein belongs to the RapZ-like family.

Functionally, displays ATPase and GTPase activities. This Histophilus somni (strain 129Pt) (Haemophilus somnus) protein is Nucleotide-binding protein HS_1178.